The sequence spans 683 residues: Solute carrier organic anion transporter family member 2B1 (683 aa).

A disordered region spans residues 1 to 30 (MPDRSTKTTMGTEDMHERKVSVEPQDSHQD). Over 1-41 (MPDRSTKTTMGTEDMHERKVSVEPQDSHQDAQPRGMFHNIK) the chain is Cytoplasmic. A compositionally biased stretch (basic and acidic residues) spans 13-30 (EDMHERKVSVEPQDSHQD). Residue Ser-21 is modified to Phosphoserine. Residues 42–61 (FFVLCHSLLQLTQLMISGYL) form a helical membrane-spanning segment. Topologically, residues 62–80 (KSSISTVEKRFGLSSQISG) are extracellular. A helical membrane pass occupies residues 81 to 101 (LLAAFNEVGNVSLILFVSYFG). At 102 to 107 (SRVHRP) the chain is on the cytoplasmic side. The helical transmembrane segment at 108–132 (RMIGYGALLVATAGLLMALPHFISE) threads the bilayer. At 133–177 (PYRYDHSSSDNRSLDFEASLCLPTTMAPASALSNGSCSSHTETKH) the chain is on the extracellular side. Asn-143 and Asn-166 each carry an N-linked (GlcNAc...) asparagine glycan. Residues 178 to 207 (LTMVGIMFAAQTLLGIGGVPIQPFGISYID) form a helical membrane-spanning segment. Residues 208–226 (DFAHHSNSPLYIGILFGIT) lie on the Cytoplasmic side of the membrane. Residues 227-247 (TMGPGLAYGLGSLMLRLYVDI) traverse the membrane as a helical segment. Residues 248-265 (DRMPEGGINLTPKDPRWV) lie on the Extracellular side of the membrane. A helical transmembrane segment spans residues 266-290 (GAWWLGFLISSGLVVLASSPYFFFP). The Cytoplasmic segment spans residues 291–355 (REMPKEKHEF…VKVFPRVLLR (65 aa)). Phosphoserine is present on residues Ser-312 and Ser-315. The chain crosses the membrane as a helical span at residues 356–377 (NLRHPIFLLVVLSQVCTSSMVA). Residues 378 to 397 (GMATFLPKFLERQFSITASF) lie on the Extracellular side of the membrane. Residues 398 to 421 (ANMLLGCLTIPLVIVGIMMGGVLV) traverse the membrane as a helical segment. Topologically, residues 422–425 (KRLH) are cytoplasmic. A helical transmembrane segment spans residues 426 to 449 (LSPVQCSALCLLGSLLCLLFSVPL). The Extracellular portion of the chain corresponds to 450–553 (FFIGCSTHQI…SACSRLVLPF (104 aa)). The Kazal-like domain occupies 472 to 532 (PSLFPGCSEP…VFYTNCSCVA (61 aa)). 3 disulfides stabilise this stretch: Cys-478–Cys-509, Cys-484–Cys-505, and Cys-493–Cys-530. 2 N-linked (GlcNAc...) asparagine glycosylation sites follow: Asn-527 and Asn-534. The chain crosses the membrane as a helical span at residues 554–576 (IVLFSLGAGLASITHTPSFMLIL). Topologically, residues 577–585 (RGVKKEDKT) are cytoplasmic. A helical membrane pass occupies residues 586-611 (LAVGMQFMLLRVLAWMPSPVIHGSAI). At 612-644 (DTTCVHWALTCGRRAVCRYYDHDLLRNRFIGLQ) the chain is on the extracellular side. Residues 645–662 (FFFKSGSLVCFTLVLAIL) traverse the membrane as a helical segment. At 663 to 683 (RQQSREASTRTTVKSSELQQL) the chain is on the cytoplasmic side.

This sequence belongs to the organo anion transporter (TC 2.A.60) family. As to expression, expressed in liver, kidney, small intestine mucosa, large intestine, brain, lung, spleen, stomach and heart.

Its subcellular location is the cell membrane. It localises to the basal cell membrane. The protein localises to the apical cell membrane. The enzyme catalyses dehydroepiandrosterone 3-sulfate(out) = dehydroepiandrosterone 3-sulfate(in). It carries out the reaction estrone 3-sulfate(out) = estrone 3-sulfate(in). It catalyses the reaction estrone 3-sulfate(out) + hydrogencarbonate(in) = estrone 3-sulfate(in) + hydrogencarbonate(out). The catalysed reaction is taurocholate(out) = taurocholate(in). The enzyme catalyses coproporphyrin III(out) = coproporphyrin III(in). It carries out the reaction substance P(out) = substance P(in). It catalyses the reaction pregnenolone sulfate(out) = pregnenolone sulfate(in). The catalysed reaction is prostaglandin E2(out) = prostaglandin E2(in). The enzyme catalyses prostaglandin D2(out) = prostaglandin D2(in). It carries out the reaction L-thyroxine(out) = L-thyroxine(in). Mediates the Na(+)-independent transport of steroid sulfate conjugates such as estrone 3-sulfate (E1S), dehydroepiandrosterone sulfate (DHEA-S) and pregnenolone sulfate (PregS) and other specific organic anions. Responsible for the transport of E1S through the basal membrane of syncytiotrophoblast, highlighting a potential role in the placental absorption of fetal-derived sulfated steroids including DHEA-S. Also facilitates the uptake of sulfated steroids at the basal/sinusoidal membrane of hepatocytes, therefore accounting for the major part of organic anions clearance of liver. Mediates the intestinal uptake of sulfated steroids. Mediates the uptake of the neurosteroids DHEA-S and PregS into the endothelial cells of the blood-brain barrier as the first step to enter the brain. Also plays a role in the reuptake of neuropeptides such as substance P/TAC1 and vasoactive intestinal peptide/VIP released from retinal neurons. May act as a heme transporter that promotes cellular iron availability. Also transports heme by-product coproporphyrin III (CPIII), and may be involved in their hepatic disposition. Mediates the uptake of other substrates such as prostaglandins D2 (PGD2), E1 (PGE1) and E2 (PGE2), taurocholate, L-thyroxine, leukotriene C4 and thromboxane B2. May contribute to regulate the transport of organic compounds in testis across the blood-testis-barrier. Shows a pH-sensitive substrate specificity which may be ascribed to the protonation state of the binding site and leads to a stimulation of substrate transport in an acidic microenvironment. The exact transport mechanism has not been yet deciphered but most likely involves an anion exchange, coupling the cellular uptake of organic substrate with the efflux of an anionic compound. Hydrogencarbonate/HCO3(-) acts as a probable counteranion that exchanges for organic anions. Cytoplasmic glutamate may also act as counteranion in the placenta. An inwardly directed proton gradient has also been proposed as the driving force of E1S uptake with a (H(+):E1S) stoichiometry of (1:1). The sequence is that of Solute carrier organic anion transporter family member 2B1 from Mus musculus (Mouse).